A 633-amino-acid polypeptide reads, in one-letter code: 1-deoxy-D-xylulose-5-phosphate synthase (633 aa).

Residues H74 and 115–117 (GHA) each bind thiamine diphosphate. A Mg(2+)-binding site is contributed by D146. Residues 147-148 (GA), N175, Y286, and E363 each bind thiamine diphosphate. N175 contacts Mg(2+).

This sequence belongs to the transketolase family. DXPS subfamily. Homodimer. Mg(2+) is required as a cofactor. Requires thiamine diphosphate as cofactor.

It carries out the reaction D-glyceraldehyde 3-phosphate + pyruvate + H(+) = 1-deoxy-D-xylulose 5-phosphate + CO2. It functions in the pathway metabolic intermediate biosynthesis; 1-deoxy-D-xylulose 5-phosphate biosynthesis; 1-deoxy-D-xylulose 5-phosphate from D-glyceraldehyde 3-phosphate and pyruvate: step 1/1. Catalyzes the acyloin condensation reaction between C atoms 2 and 3 of pyruvate and glyceraldehyde 3-phosphate to yield 1-deoxy-D-xylulose-5-phosphate (DXP). The polypeptide is 1-deoxy-D-xylulose-5-phosphate synthase (Dehalococcoides mccartyi (strain ATCC BAA-2100 / JCM 16839 / KCTC 5957 / BAV1)).